A 236-amino-acid polypeptide reads, in one-letter code: Ribosome maturation protein SDO1 homolog (236 aa).

This sequence belongs to the SDO1/SBDS family. In terms of assembly, crystallized in association with 70S ribosomes.

The chain is Ribosome maturation protein SDO1 homolog from Thermococcus kodakarensis (strain ATCC BAA-918 / JCM 12380 / KOD1) (Pyrococcus kodakaraensis (strain KOD1)).